Here is a 469-residue protein sequence, read N- to C-terminus: Citrate synthase, mitochondrial (469 aa).

The transit peptide at 1–30 (MSFLSVSRLAPKLLNSKNATYFLVAARNAS) directs the protein to the mitochondrion. Catalysis depends on residues histidine 304 and histidine 350. Arginine 359 is an oxaloacetate binding site. Residue aspartate 405 is part of the active site. Positions 431 and 451 each coordinate oxaloacetate.

Belongs to the citrate synthase family. Homodimer.

The protein resides in the mitochondrion matrix. It catalyses the reaction oxaloacetate + acetyl-CoA + H2O = citrate + CoA + H(+). Its pathway is carbohydrate metabolism; tricarboxylic acid cycle; isocitrate from oxaloacetate: step 1/2. Functionally, key enzyme of the Krebs tricarboxylic acid cycle which catalyzes the synthesis of citrate from acetyl coenzyme A and oxaloacetate. This is Citrate synthase, mitochondrial (cs) from Thunnus albacares (Yellowfin tuna).